The primary structure comprises 357 residues: Serpentine receptor class epsilon-30 (357 aa).

7 helical membrane passes run 31 to 51 (IFEL…IFVM), 61 to 81 (LMFL…GKFI), 121 to 141 (LLIF…FGIL), 165 to 185 (IPII…LAII), 192 to 212 (FLAR…FLFI), 253 to 273 (LVVV…ALTF), and 283 to 303 (LIEN…MFSI).

It belongs to the nematode receptor-like protein sre family.

It is found in the membrane. The chain is Serpentine receptor class epsilon-30 (sre-30) from Caenorhabditis elegans.